The chain runs to 271 residues: Orotidine 5'-phosphate decarboxylase (271 aa).

Lys-95 functions as the Proton donor in the catalytic mechanism.

It belongs to the OMP decarboxylase family. Type 2 subfamily.

The catalysed reaction is orotidine 5'-phosphate + H(+) = UMP + CO2. It functions in the pathway pyrimidine metabolism; UMP biosynthesis via de novo pathway; UMP from orotate: step 2/2. The polypeptide is Orotidine 5'-phosphate decarboxylase (pyrF) (Ralstonia nicotianae (strain ATCC BAA-1114 / GMI1000) (Ralstonia solanacearum)).